Consider the following 94-residue polypeptide: Acylphosphatase (94 aa).

The region spanning 7–94 (AVRVRISGRV…NMPRDFRITG (88 aa)) is the Acylphosphatase-like domain. Residues arginine 22 and asparagine 40 contribute to the active site.

It belongs to the acylphosphatase family.

It carries out the reaction an acyl phosphate + H2O = a carboxylate + phosphate + H(+). The chain is Acylphosphatase (acyP) from Rhizobium etli (strain ATCC 51251 / DSM 11541 / JCM 21823 / NBRC 15573 / CFN 42).